The following is an 862-amino-acid chain: Valine--tRNA ligase (862 aa).

The short motif at 43-53 (PNVTGSLHMGH) is the 'HIGH' region element. Positions 176, 179, 344, 347, 417, 420, 438, and 441 each coordinate Zn(2+). Positions 528 to 532 (KMSKS) match the 'KMSKS' region motif. Residue Lys-531 coordinates ATP. Residues 802 to 862 (RRRQEKRLKE…RIREALSQIG (61 aa)) are a coiled coil.

This sequence belongs to the class-I aminoacyl-tRNA synthetase family. ValS type 1 subfamily. Monomer. Zn(2+) serves as cofactor.

Its subcellular location is the cytoplasm. It carries out the reaction tRNA(Val) + L-valine + ATP = L-valyl-tRNA(Val) + AMP + diphosphate. Functionally, catalyzes the attachment of valine to tRNA(Val). As ValRS can inadvertently accommodate and process structurally similar amino acids such as threonine, to avoid such errors, it has a 'posttransfer' editing activity that hydrolyzes mischarged Thr-tRNA(Val) in a tRNA-dependent manner. In Thermus thermophilus (strain ATCC BAA-163 / DSM 7039 / HB27), this protein is Valine--tRNA ligase.